The primary structure comprises 105 residues: UPF0145 protein OEOE_0637 (105 aa).

Belongs to the UPF0145 family.

The polypeptide is UPF0145 protein OEOE_0637 (Oenococcus oeni (strain ATCC BAA-331 / PSU-1)).